A 124-amino-acid polypeptide reads, in one-letter code: Large ribosomal subunit protein uL18 (124 aa).

This sequence belongs to the universal ribosomal protein uL18 family. In terms of assembly, part of the 50S ribosomal subunit; part of the 5S rRNA/L5/L18/L25 subcomplex. Contacts the 5S and 23S rRNAs.

In terms of biological role, this is one of the proteins that bind and probably mediate the attachment of the 5S RNA into the large ribosomal subunit, where it forms part of the central protuberance. This is Large ribosomal subunit protein uL18 from Aquifex aeolicus (strain VF5).